The primary structure comprises 474 residues: uncharacterized protein (474 aa).

10 consecutive transmembrane segments (helical) span residues 17–39 (ILGGIIQIIGIFTLVPCIVSVYY), 44–61 (FLNFLIPGLFFSIFGFVL), 81–103 (LAWLIASFIGAIPLYLSIDYFSY), 144–166 (GVGILVLSALVLARSGTVAYLLY), 186–208 (IIWIYILYTILGVLLLYLSGLSF), 239–256 (IVMIGIMMVGGVMSFSIH), 268–286 (IQTKYALIVTAFISIIISI), 319–341 (LSLFLIIFLMLIGGGAGTTTGGV), 385–407 (AFVVFFLYCLSSFLTALIFIALG), and 444–466 (IIAMWIGRLEIIPVLVLFATLYF).

Belongs to the TrkH potassium transport family.

It is found in the cell membrane. This is an uncharacterized protein from Methanocaldococcus jannaschii (strain ATCC 43067 / DSM 2661 / JAL-1 / JCM 10045 / NBRC 100440) (Methanococcus jannaschii).